A 332-amino-acid polypeptide reads, in one-letter code: Centrosomal AT-AC splicing factor (332 aa).

The interval 1–169 (MAPAQRCPLC…QSRQEVVRSV (169 aa)) is required for centrosome location. An N6-acetyllysine; by NAT10 modification is found at Lys-31. The stretch at 137–168 (LDSYEEKEDKVIKEMAAQIREVEQSRQEVVRS) forms a coiled coil. The segment at 169–213 (VLEPQAVPDPEEGSSAPRSWKGMNSQVASSLQQPSNLDLPPAPEL) is disordered. Over residues 190-204 (GMNSQVASSLQQPSN) the composition is skewed to polar residues.

In terms of assembly, interacts with SASS6; the interaction increases with CENATAC acetylation. Acetylated. Acetylation oscillates throughout the cell cycle, and the acetylation state at Lys-31 is regulated by the deacetylase SIRT1 and the acetyltransferase NAT10. Deacetylated CENATAC is responsible for its centrosome targeting, and acetylated CENATAC promotes SASS6 degradation by enhancing the binding affinity of SASS6 for APC/C E3 ubiquitin-protein ligase complex/FZR1.

It is found in the cytoplasm. Its subcellular location is the cytoskeleton. It localises to the microtubule organizing center. The protein localises to the centrosome. Its function is as follows. Component of the minor spliceosome that promotes splicing of a specific, rare minor intron subtype. Negative regulator of centrosome duplication. Constrains centriole number by modulating the degradation of the centrosome-duplication-associated protein SASS6 in an acetylation-dependent manner. SIRT1 deacetylates CENATAC in G1 phase, allowing for SASS6 accumulation on the centrosome and subsequent procentriole assembly. The CENATAC acetylation level is restored in mitosis by NAT10, promoting SASS6 proteasome degradation by facilitating SASS6 binding to APC/C E3 ubiquitin-protein ligase complex/FZR1. The sequence is that of Centrosomal AT-AC splicing factor from Homo sapiens (Human).